A 1063-amino-acid chain; its full sequence is JmjC domain-containing histone demethylation protein 1 (1063 aa).

The JmjC domain occupies 86 to 266 (LYNVLSLEYS…TQLRVYQVEN (181 aa)). T160 lines the substrate pocket. H163 and D165 together coordinate Fe cation. Substrate is bound at residue K180. H234 serves as a coordination point for Fe cation. Over residues 379–389 (GLEEEAEDEDV) the composition is skewed to acidic residues. 3 disordered regions span residues 379 to 400 (GLEEEAEDEDVKPETKKEAEER), 554 to 750 (ESDE…NPYN), and 776 to 1040 (VELH…KRAK). Basic and acidic residues predominate over residues 390 to 400 (KPETKKEAEER). Acidic residues-rich tracts occupy residues 594–605 (PEYDEDMEEYDP) and 613–631 (ELEEEEEEEEGEEEEEEEY). A compositionally biased stretch (low complexity) spans 636-646 (TRRSSTRGSAS). Basic and acidic residues-rich tracts occupy residues 647–665 (TKEEPQEEKEEKEAAPKKE), 674–712 (EKSSKPEKDTTEAKLKKEKKKKEMERRLRDSELEAELRA), 776–806 (VELHIEKNLYKLEPKRDESESREPSMEHEDS), 813–835 (PYDRYSHYHTENSHFQEDQDSHR), and 892–902 (EPRRSNDRRTS). Over residues 926-937 (AEAASASSSRHS) the composition is skewed to low complexity. 2 stretches are compositionally biased toward polar residues: residues 950–963 (LNSSRHSSTDTPMY) and 973–982 (WLPNTSNVTR). A compositionally biased stretch (pro residues) spans 1005 to 1016 (PPFPRSITPPPV). The span at 1020–1030 (ELKSQSNGRKS) shows a compositional bias: polar residues. The span at 1031–1040 (NYSEDGKRAK) shows a compositional bias: basic and acidic residues.

Belongs to the JHDM1 histone demethylase family. It depends on Fe(2+) as a cofactor.

The protein resides in the nucleus. It catalyses the reaction N(6),N(6)-dimethyl-L-lysyl(36)-[histone H3] + 2 2-oxoglutarate + 2 O2 = L-lysyl(36)-[histone H3] + 2 formaldehyde + 2 succinate + 2 CO2. Histone demethylase that specifically demethylates 'Lys-36' of histone H3, thereby playing a central role in histone code. This Caenorhabditis briggsae protein is JmjC domain-containing histone demethylation protein 1 (jhdm-1).